Here is a 150-residue protein sequence, read N- to C-terminus: Ribonuclease H (150 aa).

The RNase H type-1 domain maps to methionine 1–threonine 141. Positions 9, 47, 69, and 133 each coordinate Mg(2+).

Belongs to the RNase H family. As to quaternary structure, monomer. Mg(2+) is required as a cofactor.

It localises to the cytoplasm. It catalyses the reaction Endonucleolytic cleavage to 5'-phosphomonoester.. Endonuclease that specifically degrades the RNA of RNA-DNA hybrids. This chain is Ribonuclease H, found in Xanthomonas oryzae pv. oryzae (strain MAFF 311018).